Consider the following 211-residue polypeptide: Glutathione S-transferase class-mu 28 kDa isozyme (211 aa).

The 83-residue stretch at 4–86 (DHIKVIYFNG…YMAKKHHMMG (83 aa)) folds into the GST N-terminal domain. Tyr10, Arg16, Trp41, Lys45, Leu53, Glu70, Ser71, and Asp104 together coordinate glutathione. Residues 88–211 (TEEEYYNVEK…YLSDRAATPF (124 aa)) enclose the GST C-terminal domain.

Belongs to the GST superfamily. Mu family. Homodimer.

It carries out the reaction RX + glutathione = an S-substituted glutathione + a halide anion + H(+). Conjugation of reduced glutathione to a wide number of exogenous and endogenous hydrophobic electrophiles. In terms of biological role, GST isoenzymes appear to play a central role in the parasite detoxification system. Other functions are also suspected including a role in increasing the solubility of haematin in the parasite gut. In Schistosoma haematobium (Blood fluke), this protein is Glutathione S-transferase class-mu 28 kDa isozyme.